Here is a 443-residue protein sequence, read N- to C-terminus: ASTRA-associated protein 1 (443 aa).

WD repeat units lie at residues 23–67 (YHKR…PITH), 71–110 (EGNS…QRSI), 258–295 (HYPN…QLET), and 318–359 (KVHL…VEQT). The tract at residues 372 to 391 (SSMGDLTNGSGSNTESSSKS) is disordered. Positions 378–391 (TNGSGSNTESSSKS) are enriched in low complexity.

Belongs to the WD repeat ASA1 family. Component of the ASTRA chromatin remodeling machinery complex composed of at least RVB1, RVB2, TRA1, TEL2, TTI1 and TTI2.

It localises to the nucleus. Its function is as follows. Component of the ASTRA complex involved in chromatin remodeling. This chain is ASTRA-associated protein 1 (ASA1), found in Saccharomyces cerevisiae (strain JAY291) (Baker's yeast).